A 179-amino-acid polypeptide reads, in one-letter code: Pyridoxal 5'-phosphate synthase subunit PdxT (179 aa).

48-50 (GES) lines the L-glutamine pocket. Cys-79 acts as the Nucleophile in catalysis. Residues Arg-101 and 127–128 (IR) contribute to the L-glutamine site. Catalysis depends on charge relay system residues His-163 and Glu-165.

It belongs to the glutaminase PdxT/SNO family. In the presence of PdxS, forms a dodecamer of heterodimers. Only shows activity in the heterodimer.

The enzyme catalyses aldehydo-D-ribose 5-phosphate + D-glyceraldehyde 3-phosphate + L-glutamine = pyridoxal 5'-phosphate + L-glutamate + phosphate + 3 H2O + H(+). The catalysed reaction is L-glutamine + H2O = L-glutamate + NH4(+). It participates in cofactor biosynthesis; pyridoxal 5'-phosphate biosynthesis. Functionally, catalyzes the hydrolysis of glutamine to glutamate and ammonia as part of the biosynthesis of pyridoxal 5'-phosphate. The resulting ammonia molecule is channeled to the active site of PdxS. In Francisella tularensis subsp. novicida (strain U112), this protein is Pyridoxal 5'-phosphate synthase subunit PdxT.